A 479-amino-acid chain; its full sequence is G-rich sequence factor 1 (479 aa).

The transit peptide at 1 to 116 directs the protein to the mitochondrion; it reads MAGTRWVLGA…AAAAGPARGY (116 aa). 2 RRM domains span residues 149–245 and 249–325; these read YLIR…PSPV and GVVR…PSRR. Ser-243 bears the Phosphoserine mark. Ser-334 carries the post-translational modification Phosphoserine. Positions 400–479 constitute an RRM 3 domain; the sequence is HFVHMRGLPF…LFLNSCPKGK (80 aa).

As to quaternary structure, monomer. Found in a complex with DDX28, DHX30, FASTKD2 and FASTKD5. Interacts with the mitochondrial RNase P complex subunit TRMT10C/MRPP1. Interacts with the 2 components of the mitochondrial degradosome complex, PNPT1 and SUPV3L1, in an RNA-dependent manner.

It localises to the mitochondrion matrix. Regulator of post-transcriptional mitochondrial gene expression, required for assembly of the mitochondrial ribosome and for recruitment of mRNA and lncRNA. Binds RNAs containing the 14 base G-rich element. Preferentially binds RNAs transcribed from three contiguous genes on the light strand of mtDNA, the ND6 mRNA, and the long non-coding RNAs for MT-CYB and MT-ND5, each of which contains multiple consensus binding sequences. Involved in the degradosome-mediated decay of non-coding mitochondrial transcripts (MT-ncRNA) and tRNA-like molecules. Acts by unwinding G-quadruplex RNA structures in MT-ncRNA, thus facilitating their degradation by the degradosome. G-quadruplexes (G4) are non-canonical 4 stranded structures formed by transcripts from the light strand of mtDNA. The polypeptide is G-rich sequence factor 1 (Grsf1) (Mus musculus (Mouse)).